Reading from the N-terminus, the 602-residue chain is MAAAPSATAPKHNYTLGTNASQLELYKYLKTVPPIPELRQAVTIKKYEEASVDDTLYPLIDEHQIIMVVGAFFGDEGKGKTVDAVARHPACTCVARVNSGENAGHTVFDDIGRKYVFNLAPSSLLTPNTRNYVSSECVMDPISFMEREIGQFIKSNMPYKDKLFVGNVFVVTPYHKLLDLLGSAPNSSTLKGMSPIHASKVTKRGIRLDHIFNDEGVLRARLAKDMDTYYGLLKVKGLTDKDVVRRCEEENADGVERVPGYVVDFARAENKIDYLVKLYTERVKNNKDFPRRCDVTHELRAALARGEKLLLEGPQSYWLSNAREKFWESTTSADTTAGGLLASAQFNFQRYKVLVINVHKAPGSSRVGIGANPSSFVPQDYYSAQDIKTLEALPKGGCVDFDKIQNFFYTKAFNTESKTFNGIYEPLEYEDATGKYNIGVAMSIASARHHGECGAVTKKPRVCGFFDCVLHFEVNAVQGPYLSISAVDRGDDYDRIGITIAYVYYDVGNKMVDANGRVYKNGDIIKAGDPVPCEMALYHCYPIVKVINGWKGAPIAASKRRPNEPLPKGVCEFIANVEFFTGAKVISIGNGPRGSDIIYLKQ.

Residues 74 to 80 and 104 to 106 contribute to the GTP site; these read GDEGKGK and GHT. Residue Asp75 is the Proton acceptor of the active site. Asp75 and Gly104 together coordinate Mg(2+). IMP contacts are provided by residues 75 to 78, 102 to 105, Thr189, Lys203, Gln315, Thr331, and Lys459; these read DEGK and NAGH. Catalysis depends on His105, which acts as the Proton donor. 455–461 contacts substrate; that stretch reads AVTKKPR. GTP contacts are provided by residues Arg461 and 589–591; that span reads GNG.

It belongs to the adenylosuccinate synthetase family. As to quaternary structure, homodimer. Requires Mg(2+) as cofactor.

The protein localises to the cytoplasm. The enzyme catalyses IMP + L-aspartate + GTP = N(6)-(1,2-dicarboxyethyl)-AMP + GDP + phosphate + 2 H(+). The protein operates within purine metabolism; AMP biosynthesis via de novo pathway; AMP from IMP: step 1/2. Functionally, plays an important role in the salvage pathway for purine nucleotide biosynthesis. Catalyzes the first committed step in the biosynthesis of AMP from IMP. The protein is Adenylosuccinate synthetase of Trypanosoma brucei gambiense (strain MHOM/CI/86/DAL972).